Consider the following 258-residue polypeptide: uncharacterized protein (258 aa).

Transmembrane regions (helical) follow at residues 14 to 34, 53 to 73, 110 to 130, 185 to 205, and 238 to 258; these read LAFP…LAAI, VIIW…YFFV, AALC…WLAL, GLAL…GIIF, and GINT…AQLI.

It belongs to the TMEM19 family.

It is found in the cell membrane. This is an uncharacterized protein from Synechocystis sp. (strain ATCC 27184 / PCC 6803 / Kazusa).